The chain runs to 347 residues: Homocysteine S-methyltransferase 3 (347 aa).

The Hcy-binding domain occupies leucine 12–leucine 333. Zn(2+) is bound by residues cysteine 251, cysteine 318, and cysteine 319.

Monomer. The cofactor is Zn(2+). As to expression, expressed predominantly in rosette leaves. Expressed in roots, cauline leaves and developing seeds.

It catalyses the reaction S-methyl-L-methionine + L-homocysteine = 2 L-methionine + H(+). Catalyzes methyl transfer from S-methylmethionine (SMM) to adenosyl-L-homocysteine (AdoMet). SMM degradation (by HMT-1, HMT-2 and HMT-3) and biosynthesis (by MMT1) constitute the SMM cycle in plants, which is probably required to achieve short term control of AdoMet level. This chain is Homocysteine S-methyltransferase 3 (HMT3), found in Arabidopsis thaliana (Mouse-ear cress).